The primary structure comprises 320 residues: Replication factor C small subunit 2 (320 aa).

44-51 (GPPGTGKT) contributes to the ATP binding site.

Belongs to the activator 1 small subunits family. RfcS subfamily. In terms of assembly, heteromultimer composed of small subunits (RfcS) and large subunits (RfcL).

Its function is as follows. Part of the RFC clamp loader complex which loads the PCNA sliding clamp onto DNA. In Pyrobaculum islandicum (strain DSM 4184 / JCM 9189 / GEO3), this protein is Replication factor C small subunit 2.